We begin with the raw amino-acid sequence, 62 residues long: Ubiquinol-cytochrome c reductase complex 6.7 kDa protein (62 aa).

Over threonine 2–aspartate 25 the chain is Mitochondrial matrix. Residues isoleucine 26–isoleucine 44 traverse the membrane as a helical segment. The Mitochondrial intermembrane portion of the chain corresponds to glutamine 45–lysine 62.

Belongs to the UQCR11/QCR10 family. As to quaternary structure, component of the ubiquinol-cytochrome c oxidoreductase (cytochrome b-c1 complex, complex III, CIII), a multisubunit enzyme composed of 3 respiratory subunits cytochrome b, cytochrome c1 and Rieske protein, 2 core protein subunits, and additional low-molecular weight protein subunits. The complex exists as an obligatory dimer and forms supercomplexes (SCs) in the inner mitochondrial membrane with cytochrome c oxidase (complex IV, CIV).

It is found in the mitochondrion inner membrane. Functionally, component of the ubiquinol-cytochrome c oxidoreductase, a multisubunit transmembrane complex that is part of the mitochondrial electron transport chain which drives oxidative phosphorylation. The respiratory chain contains 3 multisubunit complexes succinate dehydrogenase (complex II, CII), ubiquinol-cytochrome c oxidoreductase (cytochrome b-c1 complex, complex III, CIII) and cytochrome c oxidase (complex IV, CIV), that cooperate to transfer electrons derived from NADH and succinate to molecular oxygen, creating an electrochemical gradient over the inner membrane that drives transmembrane transport and the ATP synthase. The cytochrome b-c1 complex catalyzes electron transfer from ubiquinol to cytochrome c, linking this redox reaction to translocation of protons across the mitochondrial inner membrane, with protons being carried across the membrane as hydrogens on the quinol. In the process called Q cycle, 2 protons are consumed from the matrix, 4 protons are released into the intermembrane space and 2 electrons are passed to cytochrome c. QCR10 has a role in CIII assembly and RIP1 stability. This Solanum tuberosum (Potato) protein is Ubiquinol-cytochrome c reductase complex 6.7 kDa protein.